A 377-amino-acid polypeptide reads, in one-letter code: Queuine tRNA-ribosyltransferase (377 aa).

Aspartate 89 acts as the Proton acceptor in catalysis. Residues 89 to 93 (DSGGF), aspartate 143, glutamine 187, and glycine 214 contribute to the substrate site. The tract at residues 245–251 (GVGKPED) is RNA binding. Residue aspartate 264 is the Nucleophile of the active site. Residues 269 to 273 (TRNAR) are RNA binding; important for wobble base 34 recognition. Positions 302, 304, 307, and 333 each coordinate Zn(2+).

The protein belongs to the queuine tRNA-ribosyltransferase family. Homodimer. Within each dimer, one monomer is responsible for RNA recognition and catalysis, while the other monomer binds to the replacement base PreQ1. Zn(2+) is required as a cofactor.

The catalysed reaction is 7-aminomethyl-7-carbaguanine + guanosine(34) in tRNA = 7-aminomethyl-7-carbaguanosine(34) in tRNA + guanine. It participates in tRNA modification; tRNA-queuosine biosynthesis. In terms of biological role, catalyzes the base-exchange of a guanine (G) residue with the queuine precursor 7-aminomethyl-7-deazaguanine (PreQ1) at position 34 (anticodon wobble position) in tRNAs with GU(N) anticodons (tRNA-Asp, -Asn, -His and -Tyr). Catalysis occurs through a double-displacement mechanism. The nucleophile active site attacks the C1' of nucleotide 34 to detach the guanine base from the RNA, forming a covalent enzyme-RNA intermediate. The proton acceptor active site deprotonates the incoming PreQ1, allowing a nucleophilic attack on the C1' of the ribose to form the product. After dissociation, two additional enzymatic reactions on the tRNA convert PreQ1 to queuine (Q), resulting in the hypermodified nucleoside queuosine (7-(((4,5-cis-dihydroxy-2-cyclopenten-1-yl)amino)methyl)-7-deazaguanosine). This Shewanella piezotolerans (strain WP3 / JCM 13877) protein is Queuine tRNA-ribosyltransferase.